A 459-amino-acid chain; its full sequence is O-phospho-L-seryl-tRNA:Cys-tRNA synthase 1 (459 aa).

Pyridoxal 5'-phosphate-binding positions include 152–153 (AR), N257, and 280–282 (SGH). N6-(pyridoxal phosphate)lysine is present on K283.

This sequence belongs to the SepCysS family. In terms of assembly, homodimer. Interacts with SepRS. The cofactor is pyridoxal 5'-phosphate.

It catalyses the reaction O-phospho-L-seryl-tRNA(Cys) + hydrogen sulfide + H(+) = L-cysteinyl-tRNA(Cys) + phosphate. Functionally, converts O-phospho-L-seryl-tRNA(Cys) (Sep-tRNA(Cys)) to L-cysteinyl-tRNA(Cys) (Cys-tRNA(Cys)). This Methanococcoides burtonii (strain DSM 6242 / NBRC 107633 / OCM 468 / ACE-M) protein is O-phospho-L-seryl-tRNA:Cys-tRNA synthase 1.